A 328-amino-acid chain; its full sequence is Biotin synthase (328 aa).

A Radical SAM core domain is found at Phe49–Glu273. Residues Cys67, Cys71, and Cys74 each coordinate [4Fe-4S] cluster. The [2Fe-2S] cluster site is built by Ser110, Cys142, Cys201, and Arg277.

Belongs to the radical SAM superfamily. Biotin synthase family. As to quaternary structure, homodimer. [4Fe-4S] cluster is required as a cofactor. [2Fe-2S] cluster serves as cofactor.

It catalyses the reaction (4R,5S)-dethiobiotin + (sulfur carrier)-SH + 2 reduced [2Fe-2S]-[ferredoxin] + 2 S-adenosyl-L-methionine = (sulfur carrier)-H + biotin + 2 5'-deoxyadenosine + 2 L-methionine + 2 oxidized [2Fe-2S]-[ferredoxin]. The protein operates within cofactor biosynthesis; biotin biosynthesis; biotin from 7,8-diaminononanoate: step 2/2. Functionally, catalyzes the conversion of dethiobiotin (DTB) to biotin by the insertion of a sulfur atom into dethiobiotin via a radical-based mechanism. The protein is Biotin synthase of Methanococcus vannielii (strain ATCC 35089 / DSM 1224 / JCM 13029 / OCM 148 / SB).